Here is a 68-residue protein sequence, read N- to C-terminus: DNA-directed RNA polymerase subunit omega (68 aa).

The protein belongs to the RNA polymerase subunit omega family. In terms of assembly, the RNAP catalytic core consists of 2 alpha, 1 beta, 1 beta' and 1 omega subunit. When a sigma factor is associated with the core the holoenzyme is formed, which can initiate transcription.

It carries out the reaction RNA(n) + a ribonucleoside 5'-triphosphate = RNA(n+1) + diphosphate. Its function is as follows. Promotes RNA polymerase assembly. Latches the N- and C-terminal regions of the beta' subunit thereby facilitating its interaction with the beta and alpha subunits. The protein is DNA-directed RNA polymerase subunit omega of Desulfitobacterium hafniense (strain DSM 10664 / DCB-2).